The chain runs to 244 residues: Na(+)-translocating NADH-quinone reductase subunit E (244 aa).

Helical transmembrane passes span 11–31, 47–67, 90–110, 123–143, 153–173, and 189–209; these read LLGIFLQATFIQNILLSTFLG, GLGMSVALVLTITGSINWLIH, FLELITFIVVIAAFTQILELL, GIFLPLIAVNCAILGGVLFGI, VVFSLGSGCGWWLAIVLFATI, and MGISFITTGLIAMAFMGLTGI.

Belongs to the NqrDE/RnfAE family. Composed of six subunits; NqrA, NqrB, NqrC, NqrD, NqrE and NqrF.

It localises to the cell inner membrane. The enzyme catalyses a ubiquinone + n Na(+)(in) + NADH + H(+) = a ubiquinol + n Na(+)(out) + NAD(+). NQR complex catalyzes the reduction of ubiquinone-1 to ubiquinol by two successive reactions, coupled with the transport of Na(+) ions from the cytoplasm to the periplasm. NqrA to NqrE are probably involved in the second step, the conversion of ubisemiquinone to ubiquinol. This chain is Na(+)-translocating NADH-quinone reductase subunit E, found in Chlamydia muridarum (strain MoPn / Nigg).